A 261-amino-acid polypeptide reads, in one-letter code: MTGINLITSAPEVNSWAEAVEQDSAPHIQEGADGIRTETAFTEVDGVRYKVVTQFKVINKRVPKVVADRKKWVKFGSCKGEPAGPQVATTYVAEEVEMQFTRNRAGEQILDVQEDKQAAKTTSREHCRHCKGNDHWSTHCPYKVMYQLDEEADANQDADSKNALGLRGDGRQMERNRSDENTCRVTNLPQEMNEDELRDVFGRIGRVIRIFIARDKITGLPKGFAFVTFESRDDAARAIAELNDIRMYHMVLKVEWTRPSN.

Positions 156-180 (QDADSKNALGLRGDGRQMERNRSDE) are disordered. The segment covering 168 to 180 (GDGRQMERNRSDE) has biased composition (basic and acidic residues). The RRM domain maps to 181–259 (NTCRVTNLPQ…MVLKVEWTRP (79 aa)).

The protein belongs to the eIF-3 subunit G family. In terms of assembly, component of the eukaryotic translation initiation factor 3 (eIF-3) complex.

The protein localises to the cytoplasm. Functionally, RNA-binding component of the eukaryotic translation initiation factor 3 (eIF-3) complex, which is involved in protein synthesis of a specialized repertoire of mRNAs and, together with other initiation factors, stimulates binding of mRNA and methionyl-tRNAi to the 40S ribosome. The eIF-3 complex specifically targets and initiates translation of a subset of mRNAs involved in cell proliferation. This subunit can bind 18S rRNA. The sequence is that of Eukaryotic translation initiation factor 3 subunit G from Caenorhabditis briggsae.